The primary structure comprises 79 residues: RNA-binding protein Hfq (79 aa).

In terms of domain architecture, Sm spans 10–70 (DAFLNHVRKT…ISTIMPAQPI (61 aa)).

The protein belongs to the Hfq family. Homohexamer.

Functionally, RNA chaperone that binds small regulatory RNA (sRNAs) and mRNAs to facilitate mRNA translational regulation in response to envelope stress, environmental stress and changes in metabolite concentrations. Also binds with high specificity to tRNAs. The polypeptide is RNA-binding protein Hfq (Ruegeria sp. (strain TM1040) (Silicibacter sp.)).